The primary structure comprises 1334 residues: Aldehyde oxidase 4 (1334 aa).

Residues 6 to 93 form the 2Fe-2S ferredoxin-type domain; it reads DELIFFVNGK…GAAVTTVEGV (88 aa). Residues Cys45, Cys50, Cys53, and Cys75 each coordinate [2Fe-2S] cluster. Residue Gln114 participates in Mo-molybdopterin binding. [2Fe-2S] cluster contacts are provided by Cys115, Cys118, Cys150, and Cys152. Position 152 (Cys152) interacts with Mo-molybdopterin. The region spanning 235-421 is the FAD-binding PCMH-type domain; the sequence is FQGERTIWIM…LSVFIPYSGQ (187 aa). Residues 263–270, Ala345, Thr354, His358, Asp367, and Ala411 contribute to the FAD site; that span reads LVMGNTAV. Mo-molybdopterin contacts are provided by residues Ala802, 802–803, Leu1043, 1084–1087, Gln1199, and Leu1263; these read AF and GSMG. The active-site Proton acceptor; for azaheterocycle hydroxylase activity is Glu1265.

Belongs to the xanthine dehydrogenase family. In terms of assembly, homodimer. The cofactor is [2Fe-2S] cluster. Requires FAD as cofactor. Mo-molybdopterin serves as cofactor.

The protein localises to the cytoplasm. The enzyme catalyses an aldehyde + O2 + H2O = a carboxylate + H2O2 + H(+). The catalysed reaction is retinal + O2 + H2O = retinoate + H2O2 + H(+). Its function is as follows. Aldehyde oxidase able to catalyze the oxidation of retinaldehyde into retinoate. Acts as a negative modulator of the epidermal trophism. May be able to oxidize a wide variety of aldehydes into their corresponding carboxylates and to hydroxylate azaheterocycles. This is Aldehyde oxidase 4 (Aox4) from Rattus norvegicus (Rat).